The following is a 443-amino-acid chain: FAD-dependent monooxygenase orf3 (443 aa).

A helical transmembrane segment spans residues 5–25 (SIEVAIIGAGITGITLALGLL). Positions 35 and 48 each coordinate FAD. 2 N-linked (GlcNAc...) asparagine glycosylation sites follow: N75 and N87. R116 lines the FAD pocket. R199 is an active-site residue. Positions 315 and 328 each coordinate FAD.

This sequence belongs to the paxM FAD-dependent monooxygenase family. Requires FAD as cofactor.

It localises to the membrane. It functions in the pathway secondary metabolite biosynthesis. FAD-dependent monooxygenase; part of the gene cluster that mediates the biosynthesis of nigerpyrone and its derivatives carbonarone A and pestalamide A. The biosynthesis pathway begins with the polyketide assembly by epaA to form phenylacetyl triketide precursor from successive condensation of two malonyl-CoA, presumably with one phenylacetyl-CoA starter unit produced by the phenylacetyl-CoA ligase epaB. For the nigerpyrone biosynthesis, the reactive polyketide chain is released as an aldehyde through the R-domain. A nonenzymatic cyclization and dehydration may create nigerpyrone. For the biosynthesis of carbonarone A and pestalamide A, an extra methyl group is added through the C-methyltransferase domain. Several further steps involving the dehydrogenase orf1, the cytochrome P450 monooxygenase orf2 and the FAD-dependent monooxygenase orf3 are required to form a carbonarone A precursor which is converted to carbonarone A via cyclization. The O-acetyltransferase epaC could catalyze the transfer of 2-methylsuccinyl-CoA, a common intermediate in the ethylmalonyl-CoA pathway, to generate the final product pestalamide A. This chain is FAD-dependent monooxygenase orf3, found in Aspergillus niger (strain ATCC MYA-4892 / CBS 513.88 / FGSC A1513).